Here is a 545-residue protein sequence, read N- to C-terminus: Esterase-5C (545 aa).

An N-terminal signal peptide occupies residues 1–19 (MLAARLIILLSFYWLSASA). A disulfide bridge connects residues cysteine 84 and cysteine 103. N-linked (GlcNAc...) asparagine glycosylation is present at asparagine 113. The active-site Acyl-ester intermediate is serine 207. Cysteines 259 and 271 form a disulfide. Residue asparagine 421 is glycosylated (N-linked (GlcNAc...) asparagine). Histidine 467 serves as the catalytic Charge relay system. An N-linked (GlcNAc...) asparagine glycan is attached at asparagine 507. Cysteines 515 and 536 form a disulfide.

The protein belongs to the type-B carboxylesterase/lipase family.

The protein resides in the secreted. It catalyses the reaction a carboxylic ester + H2O = an alcohol + a carboxylate + H(+). The polypeptide is Esterase-5C (Est-5C) (Drosophila persimilis (Fruit fly)).